The primary structure comprises 310 residues: Porphobilinogen deaminase (310 aa).

Cys242 carries the S-(dipyrrolylmethanemethyl)cysteine modification.

The protein belongs to the HMBS family. As to quaternary structure, monomer. Dipyrromethane is required as a cofactor.

The enzyme catalyses 4 porphobilinogen + H2O = hydroxymethylbilane + 4 NH4(+). It functions in the pathway porphyrin-containing compound metabolism; protoporphyrin-IX biosynthesis; coproporphyrinogen-III from 5-aminolevulinate: step 2/4. Its function is as follows. Tetrapolymerization of the monopyrrole PBG into the hydroxymethylbilane pre-uroporphyrinogen in several discrete steps. The sequence is that of Porphobilinogen deaminase from Shewanella sp. (strain ANA-3).